The primary structure comprises 668 residues: Probable tRNA (uracil-O(2)-)-methyltransferase (668 aa).

Positions 441–460 (QHTDSLHISTKSSLDKDDPP) are disordered. The segment at 620 to 649 (LKTRLCWFYVHHPNGCPRVAKSCPYAHGAE) adopts a C3H1-type zinc-finger fold.

It belongs to the TRM44 family.

Its subcellular location is the cytoplasm. It catalyses the reaction uridine(44) in tRNA(Ser) + S-adenosyl-L-methionine = 2'-O-methyluridine(44) in tRNA(Ser) + S-adenosyl-L-homocysteine + H(+). Probable adenosyl-L-methionine (AdoMet)-dependent tRNA (uracil-O(2)-)-methyltransferase. The protein is Probable tRNA (uracil-O(2)-)-methyltransferase (trmt44) of Xenopus laevis (African clawed frog).